Consider the following 500-residue polypeptide: UDP-N-acetylmuramoyl-L-alanyl-D-glutamate--2,6-diaminopimelate ligase (500 aa).

Ser-32 serves as a coordination point for UDP-N-acetyl-alpha-D-muramoyl-L-alanyl-D-glutamate. Gly-117–Thr-123 provides a ligand contact to ATP. Residues Thr-159–Thr-160, Ser-186, Gln-192, and Arg-194 contribute to the UDP-N-acetyl-alpha-D-muramoyl-L-alanyl-D-glutamate site. N6-carboxylysine is present on Lys-226. Meso-2,6-diaminopimelate-binding positions include Arg-395, Asp-419 to Arg-422, Gly-470, and Glu-474. The short motif at Asp-419–Arg-422 is the Meso-diaminopimelate recognition motif element.

Belongs to the MurCDEF family. MurE subfamily. It depends on Mg(2+) as a cofactor. In terms of processing, carboxylation is probably crucial for Mg(2+) binding and, consequently, for the gamma-phosphate positioning of ATP.

Its subcellular location is the cytoplasm. It catalyses the reaction UDP-N-acetyl-alpha-D-muramoyl-L-alanyl-D-glutamate + meso-2,6-diaminopimelate + ATP = UDP-N-acetyl-alpha-D-muramoyl-L-alanyl-gamma-D-glutamyl-meso-2,6-diaminopimelate + ADP + phosphate + H(+). It functions in the pathway cell wall biogenesis; peptidoglycan biosynthesis. Catalyzes the addition of meso-diaminopimelic acid to the nucleotide precursor UDP-N-acetylmuramoyl-L-alanyl-D-glutamate (UMAG) in the biosynthesis of bacterial cell-wall peptidoglycan. The sequence is that of UDP-N-acetylmuramoyl-L-alanyl-D-glutamate--2,6-diaminopimelate ligase from Parasynechococcus marenigrum (strain WH8102).